Here is a 358-residue protein sequence, read N- to C-terminus: Bi-functional coumaroyl CoA and feruloyl CoA ortho-hydroxylase F6H2-2-1 (358 aa).

Residues 200–308 enclose the Fe2OG dioxygenase domain; the sequence is SKESLLMGSR…RISVPVFVNP (109 aa). Tyrosine 216 serves as a coordination point for 2-oxoglutarate. Residues histidine 231, aspartate 233, and histidine 289 each coordinate Fe cation. The 2-oxoglutarate site is built by arginine 299 and serine 301.

The protein belongs to the iron/ascorbate-dependent oxidoreductase family. The cofactor is L-ascorbate. It depends on Fe(2+) as a cofactor. In terms of tissue distribution, mostly expressed in underground stems and stems.

It catalyses the reaction (E)-4-coumaroyl-CoA + 2-oxoglutarate + O2 = (E)-2,4-dihydroxycinnamoyl-CoA + succinate + CO2. It carries out the reaction (E)-feruloyl-CoA + 2-oxoglutarate + O2 = (E)-6-hydroxyferuloyl-CoA + succinate + CO2. It participates in phenylpropanoid metabolism. Its function is as follows. 2-oxoglutarate (OG)- and Fe(II)-dependent dioxygenase (2OGD) involved in scopoletin and umbelliferone biosynthesis. Converts feruloyl CoA into 6'-hydroxyferuloyl CoA, and p-coumaroyl CoA into 2,4-dihydroxycinnamoyl-CoA, but has no activity toward caffeoyl-CoA. The protein is Bi-functional coumaroyl CoA and feruloyl CoA ortho-hydroxylase F6H2-2-1 of Ipomoea batatas (Sweet potato).